The following is a 77-amino-acid chain: Large ribosomal subunit protein uL29 (77 aa).

It belongs to the universal ribosomal protein uL29 family.

This is Large ribosomal subunit protein uL29 from Mycolicibacterium gilvum (strain PYR-GCK) (Mycobacterium gilvum (strain PYR-GCK)).